The following is a 199-amino-acid chain: Probable GTP-binding protein EngB (199 aa).

Positions 28–199 constitute an EngB-type G domain; that stretch reads DLPEIALAGR…DSWDAILEQV (172 aa). GTP-binding positions include 36-43, 63-67, 81-84, 148-151, and 180-182; these read GRSNVGKS, GKTQL, DVPG, TKAD, and FSS. Mg(2+)-binding residues include Ser43 and Thr65.

It belongs to the TRAFAC class TrmE-Era-EngA-EngB-Septin-like GTPase superfamily. EngB GTPase family. The cofactor is Mg(2+).

Necessary for normal cell division and for the maintenance of normal septation. This Streptococcus pyogenes serotype M1 protein is Probable GTP-binding protein EngB.